Consider the following 102-residue polypeptide: Small ribosomal subunit protein uS10 (102 aa).

This sequence belongs to the universal ribosomal protein uS10 family. In terms of assembly, part of the 30S ribosomal subunit.

Functionally, involved in the binding of tRNA to the ribosomes. This Caldanaerobacter subterraneus subsp. tengcongensis (strain DSM 15242 / JCM 11007 / NBRC 100824 / MB4) (Thermoanaerobacter tengcongensis) protein is Small ribosomal subunit protein uS10.